Here is a 108-residue protein sequence, read N- to C-terminus: Cytochrome c oxidase subunit 1 (108 aa).

A helical transmembrane segment spans residues 10–30 (AFVAPVLGLLGFIPGGAGGIV). Position 49 (His49) interacts with heme a3. A run of 2 helical transmembrane segments spans residues 50–70 (FHLQVASLVTLTAMGSLYWLL) and 85–105 (LGLAVVWLWFLGMMIMAVGLH). Residue His51 coordinates Fe(II)-heme a.

This sequence belongs to the heme-copper respiratory oxidase family. Heme is required as a cofactor. It depends on Cu cation as a cofactor.

It is found in the cell membrane. It carries out the reaction 4 Fe(II)-[cytochrome c] + O2 + 8 H(+)(in) = 4 Fe(III)-[cytochrome c] + 2 H2O + 4 H(+)(out). Its pathway is energy metabolism; oxidative phosphorylation. This chain is Cytochrome c oxidase subunit 1 (cbaA), found in Thermus thermophilus.